The chain runs to 72 residues: Tetrahydromethanopterin S-methyltransferase subunit G (72 aa).

Residues 48 to 68 form a helical membrane-spanning segment; sequence IGILYGGFIGLLLFLIYTVVS.

This sequence belongs to the MtrG family. In terms of assembly, the complex is composed of 8 subunits; MtrA, MtrB, MtrC, MtrD, MtrE, MtrF, MtrG and MtrH.

Its subcellular location is the cell membrane. It carries out the reaction 5-methyl-5,6,7,8-tetrahydromethanopterin + coenzyme M + 2 Na(+)(in) = 5,6,7,8-tetrahydromethanopterin + methyl-coenzyme M + 2 Na(+)(out). Its pathway is one-carbon metabolism; methanogenesis from CO(2); methyl-coenzyme M from 5,10-methylene-5,6,7,8-tetrahydromethanopterin: step 2/2. In terms of biological role, part of a complex that catalyzes the formation of methyl-coenzyme M and tetrahydromethanopterin from coenzyme M and methyl-tetrahydromethanopterin. This is an energy-conserving, sodium-ion translocating step. The protein is Tetrahydromethanopterin S-methyltransferase subunit G of Methanosarcina barkeri (strain Fusaro / DSM 804).